A 428-amino-acid chain; its full sequence is Keratin, type I cytoskeletal 18-A (428 aa).

The interval 2-78 (SFRSQTSSTT…SVKGSGLFNN (77 aa)) is head. Residues 79-114 (EKETMQILNDRLASYLETVRNLEQANSKLELQIRET) are coil 1A. The IF rod domain occupies 79-390 (EKETMQILND…RLLDGEDFRL (312 aa)). A linker 1 region spans residues 115–131 (LEKRGPTTQDYSAYEKV). Positions 132–223 (VEDLKSQIYD…RSHQTDVEEL (92 aa)) are coil 1B. The tract at residues 224–247 (RKHISECGVQVDVDAPKGQDLSKI) is linker 12. Residues 248 to 385 (MEEIRAQYET…IATYRRLLDG (138 aa)) form a coil 2 region. The interval 386-428 (EDFRLQDALAVQTTKVQKKITVTETVVDGKVVSQSSEVQEIKK) is tail.

This sequence belongs to the intermediate filament family. Heterotetramer of two type I and two type II keratins. Keratin-18 associates with keratin-8. Phosphorylated. Post-translationally, proteolytically cleaved by caspases during epithelial cell apoptosis.

Its function is as follows. When phosphorylated, plays a role in filament reorganization. This chain is Keratin, type I cytoskeletal 18-A, found in Polypterus senegalus (Senegal bichir).